We begin with the raw amino-acid sequence, 720 residues long: Translation initiation factor IF-2 (720 aa).

Residues 48–138 (KKFKASQAKD…NEVEETKEMP (91 aa)) are disordered. 2 stretches are compositionally biased toward low complexity: residues 60 to 75 (KQNT…NKQN) and 99 to 113 (KGKQ…NKNQ). The segment covering 114–123 (KNNKNKKNNK) has biased composition (basic residues). The 170-residue stretch at 222–391 (ERPAVVTIMG…GLVAEVQELK (170 aa)) folds into the tr-type G domain. Residues 231–238 (GHVDHGKT) form a G1 region. 231–238 (GHVDHGKT) serves as a coordination point for GTP. A G2 region spans residues 256–260 (GITQH). Residues 277 to 280 (DTPG) form a G3 region. GTP is bound by residues 277-281 (DTPGH) and 331-334 (NKID). Positions 331-334 (NKID) are G4. Residues 367–369 (SAL) are G5.

This sequence belongs to the TRAFAC class translation factor GTPase superfamily. Classic translation factor GTPase family. IF-2 subfamily.

The protein localises to the cytoplasm. Its function is as follows. One of the essential components for the initiation of protein synthesis. Protects formylmethionyl-tRNA from spontaneous hydrolysis and promotes its binding to the 30S ribosomal subunits. Also involved in the hydrolysis of GTP during the formation of the 70S ribosomal complex. This Staphylococcus epidermidis (strain ATCC 35984 / DSM 28319 / BCRC 17069 / CCUG 31568 / BM 3577 / RP62A) protein is Translation initiation factor IF-2.